The following is a 517-amino-acid chain: Maturase K (517 aa).

This sequence belongs to the intron maturase 2 family. MatK subfamily.

The protein resides in the plastid. It is found in the chloroplast. Functionally, usually encoded in the trnK tRNA gene intron. Probably assists in splicing its own and other chloroplast group II introns. The sequence is that of Maturase K from Juncus effusus (Soft rush).